We begin with the raw amino-acid sequence, 149 residues long: 2S seed storage albumin protein (149 aa).

The signal sequence occupies residues 1–22 (MKLFIILATATLLIAATQAKYL). Cystine bridges form between C38-C98, C52-C87, C88-C133, and C100-C140. No IgE-binding regions lie at residues 41–53 (QVKM…VKCN), 68–81 (ALSR…ESEE), 84–95 (LRGCCVAMKEME), and 97–105 (ECVCEWMKM). Positions 108-117 (ENQKGRIGET) are igE-binding. The tract at residues 121–131 (KGIRDLKELPN) is no IgE-binding. An igE-binding region spans residues 132 to 141 (KCGISEMECH).

This sequence belongs to the 2S seed storage albumins family. As to expression, expressed in seeds (at protein level). Expressed in seeds.

Seed storage protein. The sequence is that of 2S seed storage albumin protein from Fagopyrum tataricum (Tartarian buckwheat).